An 85-amino-acid chain; its full sequence is YcgL domain-containing protein PC1_1941 (85 aa).

Residues 1–85 (MFCVIYRSAK…PVENLLNTPV (85 aa)) enclose the YcgL domain.

The polypeptide is YcgL domain-containing protein PC1_1941 (Pectobacterium carotovorum subsp. carotovorum (strain PC1)).